The primary structure comprises 186 residues: UPF0301 protein Saro_0683 (186 aa).

Belongs to the UPF0301 (AlgH) family.

This Novosphingobium aromaticivorans (strain ATCC 700278 / DSM 12444 / CCUG 56034 / CIP 105152 / NBRC 16084 / F199) protein is UPF0301 protein Saro_0683.